The primary structure comprises 149 residues: Antitoxin HigA1 (149 aa).

The 55-residue stretch at 42–96 (LIALRKHCQLSQVEVAKRMGVRQPTVSGFEKEPSDPKLSTLQRYARALDARLRLV) folds into the HTH cro/C1-type domain. The segment at residues 53–72 (QVEVAKRMGVRQPTVSGFEK) is a DNA-binding region (H-T-H motif).

As to quaternary structure, interacts with SecB-like chaperone MT2006.

Antitoxin component of an atypical, type II toxin-antitoxin chaperone (TAC) system. Probably neutralizes the toxic effects of cognate toxin HigB1, which also requires SecB-like chaperone MT2006 (AC Q7D7P7). Autorepresses its operon (higB1-higA1-MT2006). The sequence is that of Antitoxin HigA1 from Mycobacterium tuberculosis (strain CDC 1551 / Oshkosh).